The sequence spans 404 residues: Imidazolonepropionase (404 aa).

The Fe(3+) site is built by His73 and His75. His73 and His75 together coordinate Zn(2+). 4-imidazolone-5-propanoate contacts are provided by Arg82, Tyr145, and His178. Tyr145 is an N-formimidoyl-L-glutamate binding site. His243 provides a ligand contact to Fe(3+). His243 provides a ligand contact to Zn(2+). Gln246 provides a ligand contact to 4-imidazolone-5-propanoate. A Fe(3+)-binding site is contributed by Asp318. Residue Asp318 participates in Zn(2+) binding. N-formimidoyl-L-glutamate is bound by residues Asn320 and Gly322. Position 323 (Ser323) interacts with 4-imidazolone-5-propanoate.

The protein belongs to the metallo-dependent hydrolases superfamily. HutI family. The cofactor is Zn(2+). It depends on Fe(3+) as a cofactor.

It is found in the cytoplasm. It catalyses the reaction 4-imidazolone-5-propanoate + H2O = N-formimidoyl-L-glutamate. The protein operates within amino-acid degradation; L-histidine degradation into L-glutamate; N-formimidoyl-L-glutamate from L-histidine: step 3/3. Its function is as follows. Catalyzes the hydrolytic cleavage of the carbon-nitrogen bond in imidazolone-5-propanoate to yield N-formimidoyl-L-glutamate. It is the third step in the universal histidine degradation pathway. The sequence is that of Imidazolonepropionase from Bradyrhizobium diazoefficiens (strain JCM 10833 / BCRC 13528 / IAM 13628 / NBRC 14792 / USDA 110).